Here is a 218-residue protein sequence, read N- to C-terminus: Dynein axonemal assembly factor 6 (218 aa).

Residues 66-103 (MGPGNIGPPKAKESKAIPEPRSDESENIWNPEEVPEGA) are disordered. A compositionally biased stretch (basic and acidic residues) spans 75-89 (KAKESKAIPEPRSDE).

It belongs to the PIH1 family. In terms of assembly, interacts with HSPA1A/B, HSP90AA1 and DNAI2. Interacts with DNAAF2 and DNAAF4. Specifically expressed in testis. Detected in pachytene spermatocytes from 5 weeks of age and in pachytene and diplotene spermatocytes of adult mice. Not detected in spermatids or mature sperm.

It is found in the cytoplasm. The protein localises to the golgi apparatus. It localises to the trans-Golgi network. Functionally, plays a role in cytoplasmic pre-assembly of axonemal dynein. The sequence is that of Dynein axonemal assembly factor 6 from Mus musculus (Mouse).